The following is a 409-amino-acid chain: 4-hydroxy-3-methylbut-2-en-1-yl diphosphate synthase (flavodoxin) (409 aa).

[4Fe-4S] cluster contacts are provided by Cys-298, Cys-301, Cys-344, and Glu-351.

Belongs to the IspG family. [4Fe-4S] cluster is required as a cofactor.

It carries out the reaction (2E)-4-hydroxy-3-methylbut-2-enyl diphosphate + oxidized [flavodoxin] + H2O + 2 H(+) = 2-C-methyl-D-erythritol 2,4-cyclic diphosphate + reduced [flavodoxin]. Its pathway is isoprenoid biosynthesis; isopentenyl diphosphate biosynthesis via DXP pathway; isopentenyl diphosphate from 1-deoxy-D-xylulose 5-phosphate: step 5/6. Its function is as follows. Converts 2C-methyl-D-erythritol 2,4-cyclodiphosphate (ME-2,4cPP) into 1-hydroxy-2-methyl-2-(E)-butenyl 4-diphosphate. This is 4-hydroxy-3-methylbut-2-en-1-yl diphosphate synthase (flavodoxin) from Dechloromonas aromatica (strain RCB).